The following is a 108-amino-acid chain: DNA-binding protein HBbu (108 aa).

This sequence belongs to the bacterial histone-like protein family.

In terms of biological role, histone-like DNA-binding protein which is capable of wrapping DNA to stabilize it, and thus to prevent its denaturation under extreme environmental conditions. The chain is DNA-binding protein HBbu (hbb) from Borrelia andersonii (Borreliella andersonii).